The primary structure comprises 686 residues: Tripartite terminase subunit 3 (686 aa).

The Walker A motif motif lies at 219–226 (IPRRHGKT). Residues 314 to 319 (LLYVDE) carry the Walker B motif motif. Glutamate 319 acts as the For ATPase activity in catalysis. Residues aspartate 475, glutamate 548, and aspartate 660 each act as for nuclease activity in the active site.

The protein belongs to the herpesviridae TRM3 protein family. In terms of assembly, interacts with the terminase subunits TRM1 and TRM2. Interacts with portal protein.

The protein resides in the host nucleus. Its function is as follows. Component of the molecular motor that translocates viral genomic DNA in empty capsid during DNA packaging. Forms a tripartite terminase complex together with TRM1 and TRM2 in the host cytoplasm. Once the complex reaches the host nucleus, it interacts with the capsid portal vertex. This portal forms a ring in which genomic DNA is translocated into the capsid. TRM3 carries an RNase H-like nuclease activity that plays an important role for the cleavage of concatemeric viral DNA into unit length genomes. In Equine herpesvirus 2 (strain 86/87) (EHV-2), this protein is Tripartite terminase subunit 3.